The following is a 103-amino-acid chain: UPF0145 protein EF_0241 (103 aa).

Belongs to the UPF0145 family.

The polypeptide is UPF0145 protein EF_0241 (Enterococcus faecalis (strain ATCC 700802 / V583)).